Here is a 277-residue protein sequence, read N- to C-terminus: Phosphate import ATP-binding protein PstB 2 (277 aa).

One can recognise an ABC transporter domain in the interval 31 to 272; it reads IEVPGLSLFY…PAKKQTEDYI (242 aa). Residue 63-70 participates in ATP binding; it reads GPSGCGKS.

It belongs to the ABC transporter superfamily. Phosphate importer (TC 3.A.1.7) family. The complex is composed of two ATP-binding proteins (PstB), two transmembrane proteins (PstC and PstA) and a solute-binding protein (PstS).

The protein resides in the cell inner membrane. The enzyme catalyses phosphate(out) + ATP + H2O = ADP + 2 phosphate(in) + H(+). Part of the ABC transporter complex PstSACB involved in phosphate import. Responsible for energy coupling to the transport system. This chain is Phosphate import ATP-binding protein PstB 2, found in Pseudomonas syringae pv. tomato (strain ATCC BAA-871 / DC3000).